Reading from the N-terminus, the 440-residue chain is NADH-quinone oxidoreductase subunit D (440 aa).

Belongs to the complex I 49 kDa subunit family. NDH-1 is composed of 14 different subunits. Subunits NuoB, C, D, E, F, and G constitute the peripheral sector of the complex.

The protein resides in the cell membrane. The catalysed reaction is a quinone + NADH + 5 H(+)(in) = a quinol + NAD(+) + 4 H(+)(out). In terms of biological role, NDH-1 shuttles electrons from NADH, via FMN and iron-sulfur (Fe-S) centers, to quinones in the respiratory chain. The immediate electron acceptor for the enzyme in this species is believed to be a menaquinone. Couples the redox reaction to proton translocation (for every two electrons transferred, four hydrogen ions are translocated across the cytoplasmic membrane), and thus conserves the redox energy in a proton gradient. This chain is NADH-quinone oxidoreductase subunit D, found in Acidothermus cellulolyticus (strain ATCC 43068 / DSM 8971 / 11B).